The sequence spans 547 residues: MAIPGRQYGLILPKKTQPLNRVLQKPSVFGNDSDDDEASVSESLQREAAKKQAMRQTKLEIQKALAEDSTVYEYDSIYDEMQKKKEENNPKLLMGKDRKPKYIHNLLKAVEIRKKEQEKRMEKKIQREREMEKGEFDDKEAFVTSAYKKKLEERAEEEEREKRAAALEARLDVTKQKDLSGFYRHLLNQAVGEEAVPKSSFREARTVIKEEKLRGYPDETNSENRPQQNCALQSGVEEAEENPDADSDSEESCDDGERGDHKVKSRGEEDTGASTKYLKHHKNHTHSRSSSEEGGLSTKYHSRSSQSRGHEHKGGQHQDRQSRDQESCHKDRSHREEKSSHRHREASHKDHHWKRHEHEDKPKGRGQGERQDREWKREKYSSREQEKDRQWNDHDRYSEKEKKGKEKEEHRKARRERCEDGAKYRERKKPEGSGQSSERHRDRRESSPRPRPEDDLLDQERSSKARNTEKDKGEQGKPPRSETSLATKHRLTEERPEKGSQPERPPEAVSKFAKRSNEETVMSARDRYLARQMARINAKTYIEKEDD.

The tract at residues 25–51 is disordered; it reads KPSVFGNDSDDDEASVSESLQREAAKK. Phosphoserine occurs at positions 27 and 33. Residues 103–177 adopt a coiled-coil conformation; that stretch reads IHNLLKAVEI…EARLDVTKQK (75 aa). The tract at residues 105–169 is necessary for alternative splicing activity; sequence NLLKAVEIRK…REKRAAALEA (65 aa). Residues 188–523 are disordered; that stretch reads NQAVGEEAVP…KRSNEETVMS (336 aa). Glycyl lysine isopeptide (Lys-Gly) (interchain with G-Cter in SUMO2) cross-links involve residues lysine 198 and lysine 209. The span at 200–217 shows a compositional bias: basic and acidic residues; it reads SFREARTVIKEEKLRGYP. Residues 223 to 232 show a composition bias toward polar residues; sequence ENRPQQNCAL. Residues 237 to 254 are compositionally biased toward acidic residues; the sequence is EEAEENPDADSDSEESCD. A phosphoserine mark is found at serine 247 and serine 252. Over residues 255–269 the composition is skewed to basic and acidic residues; it reads DGERGDHKVKSRGEE. An N6-acetyllysine modification is found at lysine 276. The span at 277–287 shows a compositional bias: basic residues; that stretch reads YLKHHKNHTHS. Lysine 279 is covalently cross-linked (Glycyl lysine isopeptide (Lys-Gly) (interchain with G-Cter in SUMO2)). The span at 308–339 shows a compositional bias: basic and acidic residues; sequence RGHEHKGGQHQDRQSRDQESCHKDRSHREEKS. Over residues 340 to 355 the composition is skewed to basic residues; sequence SHRHREASHKDHHWKR. Composition is skewed to basic and acidic residues over residues 356–480 and 490–506; these read HEHE…KPPR and RLTEERPEKGSQPERPP. The stretch at 376–417 forms a coiled coil; sequence KREKYSSREQEKDRQWNDHDRYSEKEKKGKEKEEHRKARRER. The residue at position 447 (serine 447) is a Phosphoserine.

Belongs to the NSRP1 family. As to quaternary structure, interacts (via C-terminus) with SRSF1. Interacts (via C-terminus) with SRSF2.

The protein resides in the nucleus. It is found in the nucleus speckle. Its function is as follows. RNA-binding protein that mediates pre-mRNA alternative splicing regulation. This is Nuclear speckle splicing regulatory protein 1 (Nsrp1) from Rattus norvegicus (Rat).